Reading from the N-terminus, the 110-residue chain is UPF0060 membrane protein Bcep18194_A4425 (110 aa).

4 consecutive transmembrane segments (helical) span residues 9-29, 34-54, 66-86, and 88-108; these read ALFA…WLVL, PVWL…LLTL, YGGV…GVAL, and RWDV…ALQP.

The protein belongs to the UPF0060 family.

It localises to the cell inner membrane. This is UPF0060 membrane protein Bcep18194_A4425 from Burkholderia lata (strain ATCC 17760 / DSM 23089 / LMG 22485 / NCIMB 9086 / R18194 / 383).